The primary structure comprises 449 residues: AP-4 complex subunit mu-1 (449 aa).

The MHD domain maps to 184 to 448 (KNEVFLDVVE…LSHSNAYVIR (265 aa)).

It belongs to the adaptor complexes medium subunit family. Adaptor protein complex 4 (AP-4) is a heterotetramer composed of two large adaptins (epsilon-type subunit AP4E1 and beta-type subunit AP4B1), a medium adaptin (mu-type subunit AP4M1) and a small adaptin (sigma-type AP4S1). Interacts with tyrosine-based sorting signals on the cytoplasmic tail of cargo proteins such as APP, ATG9A, LAMP2 and NAGPA. Interacts with the C-terminal domain of GRID2. Interacts with GRIA1 and GRIA2; the interaction is indirect via CACNG3. Interacts with CACNG3; CACNG3 associates GRIA1 and GRIA2 with the adaptor protein complex 4 (AP-4) to target them to the somatodendritic compartment of neurons. Interacts with HOOK1 and HOOK2; the interactions are direct, mediate the interaction between FTS-Hook-FHIP (FHF) complex and AP-4 and the perinuclear distribution of AP-4.

It localises to the golgi apparatus. The protein localises to the trans-Golgi network membrane. It is found in the early endosome. Component of the adaptor protein complex 4 (AP-4). Adaptor protein complexes are vesicle coat components involved both in vesicle formation and cargo selection. They control the vesicular transport of proteins in different trafficking pathways. AP-4 forms a non clathrin-associated coat on vesicles departing the trans-Golgi network (TGN) and may be involved in the targeting of proteins from the trans-Golgi network (TGN) to the endosomal-lysosomal system. It is also involved in protein sorting to the basolateral membrane in epithelial cells and the proper asymmetric localization of somatodendritic proteins in neurons. Within AP-4, the mu-type subunit AP4M1 is directly involved in the recognition and binding of tyrosine-based sorting signals found in the cytoplasmic part of cargos. The adaptor protein complex 4 (AP-4) may also recognize other types of sorting signal. This chain is AP-4 complex subunit mu-1, found in Mus musculus (Mouse).